The primary structure comprises 336 residues: Alpha-glucoside transport system permease protein AglF (336 aa).

8 helical membrane-spanning segments follow: residues 4-24, 55-75, 113-133, 146-166, 176-196, 202-222, 258-278, and 304-324; these read LIAAILTMVAGVLVCAAYFWS, PWLFLAPALLALTLYLVYPVV, FLWLLVVPALSTFFGLIIAAL, LIFMPMAISFVGAAVIWKFIY, IGLLNAIVVALGGEPQAWITL, FFLMVILIWIQTGFAMVILSA, IAVVWTTITILVLKVFDIVLA, and FGRGAAIAVVIMILVVPIMIW. One can recognise an ABC transmembrane type-1 domain in the interval 109–325; sequence IFNNFLWLLV…ILVVPIMIWN (217 aa).

It belongs to the binding-protein-dependent transport system permease family. MalFG subfamily.

Its subcellular location is the cell inner membrane. Part of the binding-protein-dependent transport system for alpha-glucosides such as sucrose, maltose and trehalose. Probably responsible for the translocation of the substrate across the membrane. This Rhizobium meliloti (strain 1021) (Ensifer meliloti) protein is Alpha-glucoside transport system permease protein AglF (aglF).